The sequence spans 56 residues: Conotoxin Cal6.41c (56 aa).

The signal sequence occupies residues 1–23; the sequence is MSGSGAMLLGLLILVAMATSLDT. 3 cysteine pairs are disulfide-bonded: C27-C41, C33-C50, and C40-C54.

As to expression, expressed by the venom duct.

It localises to the secreted. Its function is as follows. Probable neurotoxin. The polypeptide is Conotoxin Cal6.41c (Californiconus californicus (California cone)).